The sequence spans 691 residues: Calcium-binding and coiled-coil domain-containing protein 1 (691 aa).

The p300 KIX-binding stretch occupies residues 1 to 30 (MEESPLSRAPSRGGVNFLNVARTYIPNTKV). The interval 1–190 (MEESPLSRAP…VQELERALAT (190 aa)) is N-terminal AD (CTNNB1 binding site). Residue serine 4 is modified to Phosphoserine. The interaction with GATA1 stretch occupies residues 45 to 125 (SDWIGIFKVE…FQFREPRPMD (81 aa)). Coiled-coil stretches lie at residues 145–205 (KATV…YKGI), 232–339 (ELED…AELE), and 417–514 (QSVE…ADEK). The tract at residues 501-691 (RKLEARLEKV…FSTQDPFTFE (191 aa)) is C-terminal AD (CTNNB1 binding site); interaction with CCAR1. Positions 514-606 (KWNEDATTED…SEAEDEKSVL (93 aa)) are disordered. The UBZ1-type zinc finger occupies 653-679 (WKECPICKERFPAESDKDALEDHMDGH). Zn(2+) is bound by residues cysteine 656, cysteine 659, histidine 675, and histidine 679.

Belongs to the CALCOCO family. Part of a calphoglin complex consisting of CALCOCO1, PPA1 and PGM. Interacts with the bHLH-PAS domains of GRIP1, AHR and ARNT. Interacts with CTNNB1 via both its N- and C-terminal regions. Interacts with EP300. Interacts with CCAR1 (via N-terminus) and GATA1.

The protein localises to the cytoplasm. It localises to the nucleus. In terms of biological role, functions as a coactivator for aryl hydrocarbon and nuclear receptors (NR). Recruited to promoters through its contact with the N-terminal basic helix-loop-helix-Per-Arnt-Sim (PAS) domain of transcription factors or coactivators, such as NCOA2. During ER-activation acts synergistically in combination with other NCOA2-binding proteins, such as EP300, CREBBP and CARM1. Involved in the transcriptional activation of target genes in the Wnt/CTNNB1 pathway. Functions as a secondary coactivator in LEF1-mediated transcriptional activation via its interaction with CTNNB1. Coactivator function for nuclear receptors and LEF1/CTNNB1 involves differential utilization of two different activation regions. In association with CCAR1 enhances GATA1- and MED1-mediated transcriptional activation from the gamma-globin promoter during erythroid differentiation of K562 erythroleukemia cells. Its function is as follows. Seems to enhance inorganic pyrophosphatase thus activating phosphogluomutase (PMG). Probably functions as a component of the calphoglin complex, which is involved in linking cellular metabolism (phosphate and glucose metabolism) with other core functions including protein synthesis and degradation, calcium signaling and cell growth. In Homo sapiens (Human), this protein is Calcium-binding and coiled-coil domain-containing protein 1 (CALCOCO1).